Consider the following 55-residue polypeptide: Conotoxin Cal6.40 (55 aa).

A signal peptide spans 1-21 (MSGSGVLLLTLLLLVPLSALA). Intrachain disulfides connect Cys24-Cys36, Cys29-Cys41, and Cys35-Cys50.

In terms of tissue distribution, expressed by the venom duct.

The protein localises to the secreted. Functionally, probable neurotoxin. In Californiconus californicus (California cone), this protein is Conotoxin Cal6.40.